The primary structure comprises 489 residues: 3-octaprenyl-4-hydroxybenzoate carboxy-lyase (489 aa).

Residue Asn172 participates in Mn(2+) binding. Prenylated FMN is bound by residues 175–177 (IYR), 189–191 (RWL), and 194–195 (RG). Residue Glu238 participates in Mn(2+) binding. Asp287 serves as the catalytic Proton donor.

This sequence belongs to the UbiD family. Homohexamer. Prenylated FMN is required as a cofactor. The cofactor is Mn(2+).

It localises to the cell membrane. It catalyses the reaction a 4-hydroxy-3-(all-trans-polyprenyl)benzoate + H(+) = a 2-(all-trans-polyprenyl)phenol + CO2. It participates in cofactor biosynthesis; ubiquinone biosynthesis. Functionally, catalyzes the decarboxylation of 3-octaprenyl-4-hydroxy benzoate to 2-octaprenylphenol, an intermediate step in ubiquinone biosynthesis. This Klebsiella pneumoniae (strain 342) protein is 3-octaprenyl-4-hydroxybenzoate carboxy-lyase.